An 88-amino-acid polypeptide reads, in one-letter code: MSSLSTTAIQSLDEASRKEIMQFVESEQSKSKVQSSIHNFTDMCFKKCNKDKPITSATLDGQEEACLKNCLNRFLDTNIKVVEALQGR.

The Twin CX3C motif signature appears at 44–70; the sequence is CFKKCNKDKPITSATLDGQEEACLKNC. 2 cysteine pairs are disulfide-bonded: cysteine 44–cysteine 70 and cysteine 48–cysteine 66.

Belongs to the small Tim family. Heterohexamer; composed of 3 copies of TIM8 and 3 copies of TIM13, named soluble 70 kDa complex. Associates with the TIM22 complex, whose core is composed of TIM22 and TIM54. Interacts with the transmembrane regions of multi-pass transmembrane proteins in transit.

The protein localises to the mitochondrion inner membrane. Its function is as follows. Mitochondrial intermembrane chaperone that participates in the import and insertion of some multi-pass transmembrane proteins into the mitochondrial inner membrane. Also required for the transfer of beta-barrel precursors from the TOM complex to the sorting and assembly machinery (SAM complex) of the outer membrane. Acts as a chaperone-like protein that protects the hydrophobic precursors from aggregation and guide them through the mitochondrial intermembrane space. The TIM8-TIM13 complex is non essential and only mediates the import of few proteins, while the predominant TIM9-TIM10 70 kDa complex is crucial and mediates the import of much more proteins. The protein is Mitochondrial import inner membrane translocase subunit TIM8 (TIM8) of Candida albicans (strain SC5314 / ATCC MYA-2876) (Yeast).